Consider the following 266-residue polypeptide: MTNIVVLIKQVPDTWSERKLTDGDFTLDREAADAVLDEINERAVEEALQIREKEAADGIEGSVTVLTAGPERATEAIRKALSMGADKAVHLKDDGMHGSDVIQTGWALARALGTIEGTELVIAGNESTDGVGGAVPAIIAEYLGLPQLTHLRKVSIEGGKITGERETDEGVFTLEATLPAVISVNEKINEPRFPSFKGIMAAKKKEVTVLTLAEIGVESDEVGLANAGSTVLASTPKPAKTAGEKVTDEGEGGNQIVQYLVAQKII.

Belongs to the ETF beta-subunit/FixA family. As to quaternary structure, heterodimer of an alpha and a beta subunit. FAD serves as cofactor. It depends on AMP as a cofactor.

Functionally, the electron transfer flavoprotein serves as a specific electron acceptor for other dehydrogenases. It transfers the electrons to the main respiratory chain via ETF-ubiquinone oxidoreductase (ETF dehydrogenase). This is Electron transfer flavoprotein subunit beta (etfB) from Mycobacterium bovis (strain ATCC BAA-935 / AF2122/97).